A 351-amino-acid chain; its full sequence is Flagellar P-ring protein (351 aa).

The first 20 residues, 1–20, serve as a signal peptide directing secretion; the sequence is MKKILFLFTASLLLHVTLQA.

Belongs to the FlgI family. The basal body constitutes a major portion of the flagellar organelle and consists of four rings (L,P,S, and M) mounted on a central rod.

Its subcellular location is the periplasm. It localises to the bacterial flagellum basal body. Functionally, assembles around the rod to form the L-ring and probably protects the motor/basal body from shearing forces during rotation. This Sulfurimonas denitrificans (strain ATCC 33889 / DSM 1251) (Thiomicrospira denitrificans (strain ATCC 33889 / DSM 1251)) protein is Flagellar P-ring protein.